The sequence spans 79 residues: Sec-independent protein translocase protein TatA (79 aa).

Residues 1-21 (MHMPSGTQWLIILLIVVLLFG) form a helical membrane-spanning segment.

The protein belongs to the TatA/E family. The Tat system comprises two distinct complexes: a TatABC complex, containing multiple copies of TatA, TatB and TatC subunits, and a separate TatA complex, containing only TatA subunits. Substrates initially bind to the TatABC complex, which probably triggers association of the separate TatA complex to form the active translocon.

It is found in the cell inner membrane. In terms of biological role, part of the twin-arginine translocation (Tat) system that transports large folded proteins containing a characteristic twin-arginine motif in their signal peptide across membranes. TatA could form the protein-conducting channel of the Tat system. This chain is Sec-independent protein translocase protein TatA, found in Campylobacter lari (strain RM2100 / D67 / ATCC BAA-1060).